Here is a 602-residue protein sequence, read N- to C-terminus: DNA mismatch repair protein MutL (602 aa).

Belongs to the DNA mismatch repair MutL/HexB family.

Its function is as follows. This protein is involved in the repair of mismatches in DNA. It is required for dam-dependent methyl-directed DNA mismatch repair. May act as a 'molecular matchmaker', a protein that promotes the formation of a stable complex between two or more DNA-binding proteins in an ATP-dependent manner without itself being part of a final effector complex. The chain is DNA mismatch repair protein MutL from Baumannia cicadellinicola subsp. Homalodisca coagulata.